Reading from the N-terminus, the 193-residue chain is Ion-translocating oxidoreductase complex subunit A (193 aa).

A run of 6 helical transmembrane segments spans residues 5-25 (LLLF…FLGL), 39-59 (IGMG…AWMV), 62-82 (FILL…LVIA), 102-122 (LLGI…VALL), 134-154 (AVYG…FAAI), and 171-191 (SIAL…TGLV).

The protein belongs to the NqrDE/RnfAE family. In terms of assembly, the complex is composed of six subunits: RnfA, RnfB, RnfC, RnfD, RnfE and RnfG.

It localises to the cell inner membrane. Its function is as follows. Part of a membrane-bound complex that couples electron transfer with translocation of ions across the membrane. This chain is Ion-translocating oxidoreductase complex subunit A, found in Yersinia pestis bv. Antiqua (strain Nepal516).